The primary structure comprises 356 residues: Cyanide hydratase (356 aa).

Positions 6–285 (YKAAAVTSEP…DGLLFVDIDL (280 aa)) constitute a CN hydrolase domain. The active-site Proton acceptor is E46. K128 is a catalytic residue. C163 serves as the catalytic Nucleophile.

It belongs to the carbon-nitrogen hydrolase superfamily. Nitrilase family. As to quaternary structure, oligomer of dimers, forming left-handed helical fibers.

It carries out the reaction formamide = hydrogen cyanide + H2O. In terms of biological role, catalyzes the hydration of cyanide to formamide. Degradation of cyanide may be important for plant pathogenic fungi in infection of cyanogenic plants. This is Cyanide hydratase from Leptosphaeria maculans (Blackleg fungus).